A 447-amino-acid polypeptide reads, in one-letter code: MITIKKGLDLPIAGKPAQVIHSGNAVNQVAILGEEYVGMRPSMKVREGDVVKKGQVLFEDKKNPGVIFTAPASGTITAINRGEKRVLQSVVINVEGDEKITFAKYSTEQLNTLSSEQVKQNLIESGLWTALRTRPFSKVPSIESEASSIFVNAMDTNPLAADPSVVLKEYSQDFTNGLTVLSRLFPSKPLHLCKAGDSNIPTADLENLQIHDFTGVHPAGLVGTHIHFIDPVGIQKTVWHINYQDVIAVGKLFTTGELYSERVISLAGPQVKEPRLVRTIIGANLSQLTQNELSAGKNRVISGSVLCGQIAKDSHDYLGRYALQVSVIAEGNEKEFFGWIMPQANKYSVTRTVLGHFSKKLFNFTTSENGGERAMVPIGSYERVMPLDILPTLLLRDLIVGDTDGAQELGCLELDEEDLALCSFVCPGKYEYGSILRQVLDKIEKEG.

The protein belongs to the NqrA family. Composed of six subunits; NqrA, NqrB, NqrC, NqrD, NqrE and NqrF.

It catalyses the reaction a ubiquinone + n Na(+)(in) + NADH + H(+) = a ubiquinol + n Na(+)(out) + NAD(+). Functionally, NQR complex catalyzes the reduction of ubiquinone-1 to ubiquinol by two successive reactions, coupled with the transport of Na(+) ions from the cytoplasm to the periplasm. NqrA to NqrE are probably involved in the second step, the conversion of ubisemiquinone to ubiquinol. The sequence is that of Na(+)-translocating NADH-quinone reductase subunit A from Haemophilus influenzae (strain 86-028NP).